Here is a 187-residue protein sequence, read N- to C-terminus: Large ribosomal subunit protein bL25 (187 aa).

It belongs to the bacterial ribosomal protein bL25 family. CTC subfamily. Part of the 50S ribosomal subunit; part of the 5S rRNA/L5/L18/L25 subcomplex. Contacts the 5S rRNA. Binds to the 5S rRNA independently of L5 and L18.

Its function is as follows. This is one of the proteins that binds to the 5S RNA in the ribosome where it forms part of the central protuberance. The sequence is that of Large ribosomal subunit protein bL25 from Tropheryma whipplei (strain TW08/27) (Whipple's bacillus).